A 160-amino-acid polypeptide reads, in one-letter code: Cytochrome b6-f complex subunit 4 (160 aa).

The next 3 membrane-spanning stretches (helical) occupy residues 36–56 (LLYI…GLAV), 95–115 (LLGV…PFLE), and 131–151 (TVFL…TLPI).

The protein belongs to the cytochrome b family. PetD subfamily. In terms of assembly, the 4 large subunits of the cytochrome b6-f complex are cytochrome b6, subunit IV (17 kDa polypeptide, petD), cytochrome f and the Rieske protein, while the 4 small subunits are petG, petL, petM and petN. The complex functions as a dimer.

Its subcellular location is the plastid. It localises to the chloroplast thylakoid membrane. Component of the cytochrome b6-f complex, which mediates electron transfer between photosystem II (PSII) and photosystem I (PSI), cyclic electron flow around PSI, and state transitions. The chain is Cytochrome b6-f complex subunit 4 from Solanum tuberosum (Potato).